Reading from the N-terminus, the 651-residue chain is Probable Xaa-Pro aminopeptidase P (651 aa).

The Mn(2+) site is built by Asp-448, Asp-459, Glu-557, and Glu-571.

Belongs to the peptidase M24B family. Requires Mn(2+) as cofactor.

It catalyses the reaction Release of any N-terminal amino acid, including proline, that is linked to proline, even from a dipeptide or tripeptide.. In terms of biological role, catalyzes the removal of a penultimate prolyl residue from the N-termini of peptides. The polypeptide is Probable Xaa-Pro aminopeptidase P (AMPP) (Coccidioides posadasii (strain C735) (Valley fever fungus)).